Reading from the N-terminus, the 457-residue chain is tRNA-2-methylthio-N(6)-dimethylallyladenosine synthase (457 aa).

An MTTase N-terminal domain is found at 3–120; it reads KKVYVKTFGC…LPQMIDARRE (118 aa). [4Fe-4S] cluster contacts are provided by cysteine 12, cysteine 49, cysteine 83, cysteine 157, cysteine 161, and cysteine 164. The Radical SAM core domain occupies 143 to 377; sequence RVEGPSAFVS…QATIEENVAR (235 aa). The 68-residue stretch at 380–447 folds into the TRAM domain; it reads QSMVGKVERI…PHSLRGELVL (68 aa).

This sequence belongs to the methylthiotransferase family. MiaB subfamily. Monomer. Requires [4Fe-4S] cluster as cofactor.

The protein resides in the cytoplasm. It catalyses the reaction N(6)-dimethylallyladenosine(37) in tRNA + (sulfur carrier)-SH + AH2 + 2 S-adenosyl-L-methionine = 2-methylsulfanyl-N(6)-dimethylallyladenosine(37) in tRNA + (sulfur carrier)-H + 5'-deoxyadenosine + L-methionine + A + S-adenosyl-L-homocysteine + 2 H(+). In terms of biological role, catalyzes the methylthiolation of N6-(dimethylallyl)adenosine (i(6)A), leading to the formation of 2-methylthio-N6-(dimethylallyl)adenosine (ms(2)i(6)A) at position 37 in tRNAs that read codons beginning with uridine. The polypeptide is tRNA-2-methylthio-N(6)-dimethylallyladenosine synthase (Burkholderia lata (strain ATCC 17760 / DSM 23089 / LMG 22485 / NCIMB 9086 / R18194 / 383)).